The chain runs to 279 residues: GTP cyclohydrolase MptA (279 aa).

The protein belongs to the GTP cyclohydrolase IV family. Homodimer. It depends on Fe(2+) as a cofactor.

It catalyses the reaction GTP + H2O = 7,8-dihydroneopterin 2',3'-cyclic phosphate + formate + diphosphate + H(+). Its pathway is cofactor biosynthesis; 5,6,7,8-tetrahydromethanopterin biosynthesis. Converts GTP to 7,8-dihydro-D-neopterin 2',3'-cyclic phosphate, the first intermediate in the biosynthesis of coenzyme methanopterin. This Korarchaeum cryptofilum (strain OPF8) protein is GTP cyclohydrolase MptA.